The following is a 462-amino-acid chain: Light-independent protochlorophyllide reductase subunit N (462 aa).

3 residues coordinate [4Fe-4S] cluster: Cys24, Cys49, and Cys109.

This sequence belongs to the BchN/ChlN family. In terms of assembly, protochlorophyllide reductase is composed of three subunits; ChlL, ChlN and ChlB. Forms a heterotetramer of two ChlB and two ChlN subunits. The cofactor is [4Fe-4S] cluster.

The protein localises to the plastid. Its subcellular location is the chloroplast. The enzyme catalyses chlorophyllide a + oxidized 2[4Fe-4S]-[ferredoxin] + 2 ADP + 2 phosphate = protochlorophyllide a + reduced 2[4Fe-4S]-[ferredoxin] + 2 ATP + 2 H2O. It functions in the pathway porphyrin-containing compound metabolism; chlorophyll biosynthesis (light-independent). Component of the dark-operative protochlorophyllide reductase (DPOR) that uses Mg-ATP and reduced ferredoxin to reduce ring D of protochlorophyllide (Pchlide) to form chlorophyllide a (Chlide). This reaction is light-independent. The NB-protein (ChlN-ChlB) is the catalytic component of the complex. The polypeptide is Light-independent protochlorophyllide reductase subunit N (Pleurastrum terricola (Filamentous green alga)).